The chain runs to 198 residues: DnaJ homolog subfamily C member 5 (198 aa).

Serine 8, serine 10, serine 12, and serine 15 each carry phosphoserine. One can recognise a J domain in the interval 13 to 82; sequence GESLYHVLGL…RNIYDKYGSL (70 aa). Position 17 is a phosphotyrosine (tyrosine 17). At lysine 56 the chain carries N6-acetyllysine. Serine 151 bears the Phosphoserine mark.

Oligomers. Homodimer. Interacts with the chaperone complex consisting of HSC70 and SGTA. Interacts with ZDHHC13 (via ANK repeats). Interacts with ZDHHC17 (via ANK repeats). Interacts with SYT1, SYT5 and SYT7, and with SYT9, forming a complex with SNAP25. Post-translationally, ser-10 phosphorylation induces an order-to-disorder transition triggering the interaction with Lys-58. This conformational switch modulates DNAJC5's cellular functions by reducing binding to syntaxin and synaptogamin without altering HSC70 interactions. Palmitoylated. Could be palmitoylated by DHHC3, DHHC7, DHHC15 and DHHC17. Palmitoylation occurs probably in the cysteine-rich domain and regulates DNAJC5 membrane attachment. Expressed in pancreas, kidney, skeletal muscle, liver, lung, placenta, brain and heart.

It localises to the cytoplasm. The protein localises to the cytosol. It is found in the membrane. The protein resides in the cytoplasmic vesicle. Its subcellular location is the secretory vesicle. It localises to the chromaffin granule membrane. The protein localises to the melanosome. It is found in the cell membrane. Acts as a general chaperone in regulated exocytosis. Acts as a co-chaperone for the SNARE protein SNAP-25. Involved in the calcium-mediated control of a late stage of exocytosis. May have an important role in presynaptic function. May be involved in calcium-dependent neurotransmitter release at nerve endings. In Homo sapiens (Human), this protein is DnaJ homolog subfamily C member 5.